A 174-amino-acid chain; its full sequence is RNA pyrophosphohydrolase (174 aa).

A Nudix hydrolase domain is found at 6-149 (GYRPNVGIIL…KRDVYLEALK (144 aa)). The Nudix box motif lies at 38–59 (GGIKPGESPETAMYRELYEEVG).

The protein belongs to the Nudix hydrolase family. RppH subfamily. Requires a divalent metal cation as cofactor.

Accelerates the degradation of transcripts by removing pyrophosphate from the 5'-end of triphosphorylated RNA, leading to a more labile monophosphorylated state that can stimulate subsequent ribonuclease cleavage. This chain is RNA pyrophosphohydrolase, found in Neisseria gonorrhoeae (strain ATCC 700825 / FA 1090).